A 428-amino-acid chain; its full sequence is Histidine--tRNA ligase (428 aa).

Belongs to the class-II aminoacyl-tRNA synthetase family. In terms of assembly, homodimer.

Its subcellular location is the cytoplasm. It catalyses the reaction tRNA(His) + L-histidine + ATP = L-histidyl-tRNA(His) + AMP + diphosphate + H(+). The chain is Histidine--tRNA ligase from Lactobacillus helveticus (strain DPC 4571).